We begin with the raw amino-acid sequence, 282 residues long: Phosphatidylglycerol--prolipoprotein diacylglyceryl transferase (282 aa).

3 helical membrane passes run 18-38 (LSIK…YFIA), 55-75 (VIFY…VIFQ), and 89-109 (IWHG…TGII). Position 137 (Arg137) interacts with a 1,2-diacyl-sn-glycero-3-phospho-(1'-sn-glycerol). The next 2 membrane-spanning stretches (helical) occupy residues 203 to 223 (VGET…FVEG) and 235 to 255 (IRVA…ILIY).

Belongs to the Lgt family.

It localises to the cell membrane. It catalyses the reaction L-cysteinyl-[prolipoprotein] + a 1,2-diacyl-sn-glycero-3-phospho-(1'-sn-glycerol) = an S-1,2-diacyl-sn-glyceryl-L-cysteinyl-[prolipoprotein] + sn-glycerol 1-phosphate + H(+). Its pathway is protein modification; lipoprotein biosynthesis (diacylglyceryl transfer). In terms of biological role, catalyzes the transfer of the diacylglyceryl group from phosphatidylglycerol to the sulfhydryl group of the N-terminal cysteine of a prolipoprotein, the first step in the formation of mature lipoproteins. In Staphylococcus haemolyticus (strain JCSC1435), this protein is Phosphatidylglycerol--prolipoprotein diacylglyceryl transferase.